The primary structure comprises 308 residues: Pseudouridine-5'-phosphate glycosidase (308 aa).

Glu-26 serves as the catalytic Proton donor. The substrate site is built by Lys-87 and Val-107. A Mn(2+)-binding site is contributed by Asp-139. Residue 141 to 143 coordinates substrate; the sequence is SAD. The Nucleophile role is filled by Lys-160.

This sequence belongs to the pseudouridine-5'-phosphate glycosidase family. As to quaternary structure, homotrimer. Mn(2+) is required as a cofactor.

It catalyses the reaction D-ribose 5-phosphate + uracil = psi-UMP + H2O. In terms of biological role, catalyzes the reversible cleavage of pseudouridine 5'-phosphate (PsiMP) to ribose 5-phosphate and uracil. Functions biologically in the cleavage direction, as part of a pseudouridine degradation pathway. The chain is Pseudouridine-5'-phosphate glycosidase from Legionella pneumophila subsp. pneumophila (strain Philadelphia 1 / ATCC 33152 / DSM 7513).